Here is a 499-residue protein sequence, read N- to C-terminus: Pentatricopeptide repeat-containing protein PPR5, chloroplastic (499 aa).

Residues 1 to 12 (MLACPSTSSPWP) are compositionally biased toward low complexity. The interval 1–28 (MLACPSTSSPWPQRQPPSPCPGGGGGAT) is disordered. Residues 1-45 (MLACPSTSSPWPQRQPPSPCPGGGGGATRHVALAARSKRRGAGPA) constitute a chloroplast transit peptide. 9 PPR repeats span residues 123–157 (DNGI…GCKP), 158–193 (DTSV…KCIE), 198–232 (TIVT…VVSP), 233–267 (DVYT…QCRP), 268–302 (DVIT…KERP), 303–337 (THPT…GFKP), 338–372 (NYVT…QTKV), 373–407 (HLSS…CVVP), and 408–442 (NGST…GIVP). The segment at 458–499 (DRKPRTSPGINSASKPSTDSAGDSETATSDKPEVSVWHVAAT) is disordered. Residues 465 to 484 (PGINSASKPSTDSAGDSETA) show a composition bias toward polar residues.

The protein belongs to the PPR family. P subfamily.

It is found in the plastid. The protein resides in the chloroplast. Its function is as follows. Involved in the biogenesis of the plastid translation machinery by promoting the splicing of group II introns in chloroplasts. Stabilizes the chloroplast trnG pre-RNA by directly binding to a group II intron, where it protects an endonuclease-sensitive site and stimulates splicing. Binds specific sites within group II intron trnG pre-RNA. Binds with high affinity to the 5'-UTR of the chloroplastic petA mRNA. The polypeptide is Pentatricopeptide repeat-containing protein PPR5, chloroplastic (Zea mays (Maize)).